Reading from the N-terminus, the 557-residue chain is Elongator complex protein 3 (557 aa).

Residues 91-381 enclose the Radical SAM core domain; that stretch reads RTASGIAVVA…YRVQRDIPMP (291 aa). [4Fe-4S] cluster-binding residues include C108, C118, and C121. K173 lines the acetyl-CoA pocket. In terms of domain architecture, N-acetyltransferase spans 405–557; it reads TTCRDVRTRE…LDGPYMSKRI (153 aa). A Glycyl lysine isopeptide (Lys-Gly) (interchain with G-Cter in ubiquitin) cross-link involves residue K453. Residues 485–488, 508–510, and Y541 each bind acetyl-CoA; these read ELHV and FGT.

The protein belongs to the ELP3 family. As to quaternary structure, component of the elongator complex which consists of ELP1/IKI3, ELP2, ELP3, ELP4, ELP5/IKI1 and ELP6. The elongator complex is composed of two copies of the Elp123 subcomplex (composed of ELP1/IKI3, ELP2 and ELP3) and two copies of the Elp456 subcomplex (composed of ELP4, ELP5/IKI1 and ELP6). The Elp123 subcomplex forms a two-lobed scaffold, which binds the Elp456 subcomplex asymmetrically. In each lobe, ELP2 is tightly sandwiched between ELP1/IKI3 and ELP3. The Elp123 subcomplex binds tRNA through ELP1/IKI3 and ELP3 and can bind 2 tRNAs simultaneously. tRNA-binding induces conformational rearrangements which precisely position the targeted anticodon base in the active site. ELP3 interacts with KTI11/DPH3. ELP3 interacts with KTI12. The Elp456 subcomplex binds tRNA and has ATPase activity. [4Fe-4S] cluster is required as a cofactor.

It localises to the cytoplasm. It is found in the nucleus. The catalysed reaction is uridine(34) in tRNA + acetyl-CoA + S-adenosyl-L-methionine + H2O = 5-(carboxymethyl)uridine(34) in tRNA + 5'-deoxyadenosine + L-methionine + CoA + 2 H(+). Its pathway is tRNA modification; 5-methoxycarbonylmethyl-2-thiouridine-tRNA biosynthesis. Functionally, catalytic tRNA acetyltransferase subunit of the elongator complex which is required for multiple tRNA modifications, including mcm5U (5-methoxycarbonylmethyl uridine), mcm5s2U (5-methoxycarbonylmethyl-2-thiouridine), and ncm5U (5-carbamoylmethyl uridine). In the elongator complex, acts as a tRNA uridine(34) acetyltransferase, which mediates formation of carboxymethyluridine in the wobble base at position 34 in tRNAs. The complex functions as a gamma-toxin target (TOT); disruption of the complex confers resistance to Kluyveromyces lactis toxin zymocin (pGKL1 killer toxin). May also be involved in sensitivity to Pichia inositovora toxin. Independently, ELP3 may be involved in polarized exocytosis. The sequence is that of Elongator complex protein 3 from Saccharomyces cerevisiae (strain ATCC 204508 / S288c) (Baker's yeast).